The following is a 270-amino-acid chain: Pre-mRNA-splicing factor CWC23 (270 aa).

The J domain occupies 12-84 (DLYRILHIHV…EHKKEYDIWY (73 aa)).

The protein belongs to the DnaJ family. Associated with the spliceosome.

Its subcellular location is the cytoplasm. It localises to the nucleus. Its function is as follows. Involved in pre-mRNA splicing. May be involved in endoplasmic reticulum-associated protein degradation (ERAD) and required for growth at low and high temperatures. The polypeptide is Pre-mRNA-splicing factor CWC23 (CWC23) (Kluyveromyces lactis (strain ATCC 8585 / CBS 2359 / DSM 70799 / NBRC 1267 / NRRL Y-1140 / WM37) (Yeast)).